The primary structure comprises 317 residues: MSFDKELALALEIVQVSCKITTSVAEHTLTDQTQIKNDKSPVTVGDYSVQAYVNKKIHETFPEDQIVAEEDTKTIPEDIFAKVCKHVQIYSDMKDDEIRKSIDLGNSTGGKGRHWVLDPIDGTLGFLRREQYAVCLAFMIDGDIKVGVLGCPNFEGGLIVAAQKGCGAKMFSVNDIKNGKDIHVSTTPKTSDMCFCESVEVSHTDQSRSKTITERLQVTKPPVRMDSQCKYMAIASGRADVYLRLPRNLSYQEKIWDHAAGYLIVKEAGGKVTDIYGNDLDFSLGRTLCNNHGIVASNGILHEETVNVVKDVLSDLK.

Asp-46 serves as the catalytic Proton acceptor. Mg(2+) is bound by residues Glu-69, Asp-118, Ile-120, and Asp-121. The active-site Proton acceptor is the Thr-123. Thr-123 contacts adenosine 3',5'-bisphosphate. Residues Ser-198, His-203, Ser-227, Lys-230, Arg-244, Tyr-251, and Asp-257 each contribute to the AMP site. His-203, Ser-227, Lys-230, and Arg-244 together coordinate adenosine 3',5'-bisphosphate. Residue Asp-257 coordinates Mg(2+). Asp-257 contacts adenosine 3',5'-bisphosphate.

It belongs to the inositol monophosphatase superfamily. In terms of assembly, monomer. It depends on Mg(2+) as a cofactor.

It localises to the cytoplasm. The catalysed reaction is adenosine 3',5'-bisphosphate + H2O = AMP + phosphate. It catalyses the reaction 1D-myo-inositol 1,4-bisphosphate + H2O = 1D-myo-inositol 4-phosphate + phosphate. With respect to regulation, inhibited by Li(2+). In terms of biological role, phosphatase that converts 3'-phosphoadenosine 5'-phosphate (PAP) to AMP. Is also able to hydrolyze inositol 1,4-bisphosphate but with less efficiency. The protein is 3',5'-bisphosphate nucleotidase of Entamoeba histolytica (strain ATCC 30459 / HM-1:IMSS / ABRM).